The sequence spans 258 residues: Thiazole synthase (258 aa).

Residue Lys98 is the Schiff-base intermediate with DXP of the active site. Residues Gly159, 185-186 (AG), and 207-208 (NT) contribute to the 1-deoxy-D-xylulose 5-phosphate site.

The protein belongs to the ThiG family. In terms of assembly, homotetramer. Forms heterodimers with either ThiH or ThiS.

The protein resides in the cytoplasm. The enzyme catalyses [ThiS sulfur-carrier protein]-C-terminal-Gly-aminoethanethioate + 2-iminoacetate + 1-deoxy-D-xylulose 5-phosphate = [ThiS sulfur-carrier protein]-C-terminal Gly-Gly + 2-[(2R,5Z)-2-carboxy-4-methylthiazol-5(2H)-ylidene]ethyl phosphate + 2 H2O + H(+). The protein operates within cofactor biosynthesis; thiamine diphosphate biosynthesis. Catalyzes the rearrangement of 1-deoxy-D-xylulose 5-phosphate (DXP) to produce the thiazole phosphate moiety of thiamine. Sulfur is provided by the thiocarboxylate moiety of the carrier protein ThiS. In vitro, sulfur can be provided by H(2)S. This Bacillus thuringiensis subsp. konkukian (strain 97-27) protein is Thiazole synthase.